A 216-amino-acid chain; its full sequence is Probable nicotinate-nucleotide adenylyltransferase (216 aa).

This sequence belongs to the NadD family.

It carries out the reaction nicotinate beta-D-ribonucleotide + ATP + H(+) = deamido-NAD(+) + diphosphate. The protein operates within cofactor biosynthesis; NAD(+) biosynthesis; deamido-NAD(+) from nicotinate D-ribonucleotide: step 1/1. Its function is as follows. Catalyzes the reversible adenylation of nicotinate mononucleotide (NaMN) to nicotinic acid adenine dinucleotide (NaAD). The protein is Probable nicotinate-nucleotide adenylyltransferase of Geotalea uraniireducens (strain Rf4) (Geobacter uraniireducens).